The following is an 87-amino-acid chain: Small ribosomal subunit protein uS15c (87 aa).

Belongs to the universal ribosomal protein uS15 family. As to quaternary structure, part of the 30S ribosomal subunit.

Its subcellular location is the plastid. It localises to the chloroplast. The sequence is that of Small ribosomal subunit protein uS15c (rps15) from Oenothera biennis (German evening primrose).